Consider the following 134-residue polypeptide: Large-conductance mechanosensitive channel (134 aa).

A run of 2 helical transmembrane segments spans residues 16-36 and 76-96; these read VVDMAVGIIIGVAFGKIVSSF and GVFLQAIFDFIIIAFAIFIAV.

The protein belongs to the MscL family. In terms of assembly, homopentamer.

Its subcellular location is the cell inner membrane. Its function is as follows. Channel that opens in response to stretch forces in the membrane lipid bilayer. May participate in the regulation of osmotic pressure changes within the cell. The protein is Large-conductance mechanosensitive channel of Thioalkalivibrio sulfidiphilus (strain HL-EbGR7).